Here is a 61-residue protein sequence, read N- to C-terminus: Potassium channel toxin alpha-KTx 6.8 (61 aa).

The first 23 residues, 1–23, serve as a signal peptide directing secretion; that stretch reads MNAKFILLLLVVTTTILLPDTQG. Intrachain disulfides connect cysteine 29–cysteine 50, cysteine 35–cysteine 55, cysteine 39–cysteine 57, and cysteine 45–cysteine 60. Position 60 is a cysteine amide (cysteine 60).

It belongs to the short scorpion toxin superfamily. Potassium channel inhibitor family. Alpha-KTx 06 subfamily. In terms of tissue distribution, expressed by the venom gland.

It is found in the secreted. Functionally, blocker of voltage-gated potassium channels. This is Potassium channel toxin alpha-KTx 6.8 from Opistophthalmus carinatus (African yellow leg scorpion).